The sequence spans 423 residues: COP9 signalosome complex subunit 3 (423 aa).

An N-acetylalanine modification is found at Ala2. The PCI domain maps to 197 to 365; it reads NFERALYFYE…GMVSFHDNPE (169 aa). Residues 402-423 form a disordered region; the sequence is QFVQKSMGSQEDDSGNKPSSYS. Residues Ser407, Ser410, and Ser423 each carry the phosphoserine modification.

Belongs to the CSN3 family. In terms of assembly, component of the CSN complex, composed of COPS1/GPS1, COPS2, COPS3, COPS4, COPS5, COPS6, COPS7 (COPS7A or COPS7B), COPS8 and COPS9 isoform 1. In the complex, it probably interacts directly with COPS1, COPS4, COPS8 and COPS9 isoform 1. Interacts with CK2 and PKD. Interacts with the translation initiation factor EIF3S6 and IKBKG. Interacts with ERCC6. As to expression, widely expressed. Expressed at high level in heart and skeletal muscle.

It is found in the cytoplasm. The protein localises to the nucleus. Functionally, component of the COP9 signalosome complex (CSN), a complex involved in various cellular and developmental processes. The CSN complex is an essential regulator of the ubiquitin (Ubl) conjugation pathway by mediating the deneddylation of the cullin subunits of SCF-type E3 ligase complexes, leading to decrease the Ubl ligase activity of SCF-type complexes such as SCF, CSA or DDB2. The complex is also involved in phosphorylation of p53/TP53, c-jun/JUN, IkappaBalpha/NFKBIA, ITPK1 and IRF8/ICSBP, possibly via its association with CK2 and PKD kinases. CSN-dependent phosphorylation of TP53 and JUN promotes and protects degradation by the Ubl system, respectively. This Homo sapiens (Human) protein is COP9 signalosome complex subunit 3 (COPS3).